The primary structure comprises 1168 residues: DNA-directed RNA polymerase subunit beta (1168 aa).

It belongs to the RNA polymerase beta chain family. In terms of assembly, the RNAP catalytic core consists of 2 alpha, 1 beta, 1 beta' and 1 omega subunit. When a sigma factor is associated with the core the holoenzyme is formed, which can initiate transcription.

The catalysed reaction is RNA(n) + a ribonucleoside 5'-triphosphate = RNA(n+1) + diphosphate. DNA-dependent RNA polymerase catalyzes the transcription of DNA into RNA using the four ribonucleoside triphosphates as substrates. The protein is DNA-directed RNA polymerase subunit beta of Corynebacterium kroppenstedtii (strain DSM 44385 / JCM 11950 / CIP 105744 / CCUG 35717).